Reading from the N-terminus, the 225-residue chain is Ribosome maturation factor RimP (225 aa).

This sequence belongs to the RimP family.

The protein localises to the cytoplasm. In terms of biological role, required for maturation of 30S ribosomal subunits. The chain is Ribosome maturation factor RimP from Rhodospirillum rubrum (strain ATCC 11170 / ATH 1.1.1 / DSM 467 / LMG 4362 / NCIMB 8255 / S1).